A 224-amino-acid polypeptide reads, in one-letter code: Oxaloacetate tautomerase FAHD2, mitochondrial (224 aa).

Residues 1-30 (MATSMIQRLFKQGTKIVGVGLNYASHAKEL) constitute a mitochondrion transit peptide. Glu-67, Glu-69, and Asp-98 together coordinate Mg(2+).

This sequence belongs to the FAH family. Requires Mg(2+) as cofactor. Mn(2+) serves as cofactor.

It is found in the mitochondrion. The catalysed reaction is oxaloacetate = enol-oxaloacetate. In terms of biological role, tautomerase that converts enol-oxaloacetate, a strong inhibitor of succinate dehydrogenase, to the physiological keto form of oxaloacetate. This Arabidopsis thaliana (Mouse-ear cress) protein is Oxaloacetate tautomerase FAHD2, mitochondrial.